The primary structure comprises 374 residues: Phospho-2-dehydro-3-deoxyheptonate aldolase AMT16 (374 aa).

It belongs to the class-I DAHP synthase family.

The catalysed reaction is D-erythrose 4-phosphate + phosphoenolpyruvate + H2O = 7-phospho-2-dehydro-3-deoxy-D-arabino-heptonate + phosphate. It functions in the pathway mycotoxin biosynthesis. In terms of biological role, nonribosomal peptide synthetase; part of the gene clusters that mediate the biosynthesis of AM-toxins, host-selective toxins (HSTs) causing Alternaria blotch on apple, a worldwide distributed disease. AM-toxins are cyclic depsipeptides containing the 3 residues 2-hydroxy-isovaleric acid (2-HIV), dehydroalanine, L-alanine which are common for all 3 AM-toxins I to III. The fourth precursor is L-alpha-amino-methoxyphenyl-valeric acid (L-Amv) for AM-toxin I, L-alpha-amino-phenyl-valeric acid (L-Apv) for AM-toxin II, and L-alpha-amino-hydroxyphenyl-valeric acid (L-Ahv) for AM-toxin III. AM-toxins have two target sites for affecting susceptible apple cells; they cause invagination of the plasma membrane and electrolyte loss and chloroplast disorganization. The non-ribosomal peptide synthetase AMT1 contains 4 catalytic modules and is responsible for activation of each residue in AM-toxin. The aldo-keto reductase AMT2 catalyzes the conversion of 2-keto-isovaleric acid (2-KIV) to 2-hydroxy-isovaleric acid (2-HIV), one of the precursor residues incorporated by AMT1 during AM-toxin biosynthesis, by reduction of its ketone to an alcohol. The cytochrome P450 monooxygenase AMT3 and the thioesterase AMT4 are also important for AM-toxin production, but their exact function within the AM-toxin biosynthesis are not known yet. Up to 21 proteins (including AMT1 to AMT4) are predicted to be involved in AM-toxin biosynthesis since their expression ishighly up-regulated in AM-toxin-producing cultures. This Alternaria alternata (Alternaria rot fungus) protein is Phospho-2-dehydro-3-deoxyheptonate aldolase AMT16.